We begin with the raw amino-acid sequence, 115 residues long: Protein Wnt-2 (115 aa).

The O-palmitoleoyl serine; by PORCN moiety is linked to residue serine 1. Cysteine 81 and cysteine 96 are disulfide-bonded. A glycan (N-linked (GlcNAc...) asparagine) is linked at asparagine 82.

This sequence belongs to the Wnt family. Post-translationally, palmitoleoylation is required for efficient binding to frizzled receptors. Depalmitoleoylation leads to Wnt signaling pathway inhibition.

The protein resides in the secreted. Its subcellular location is the extracellular space. The protein localises to the extracellular matrix. In terms of biological role, ligand for members of the frizzled family of seven transmembrane receptors. Probable developmental protein. May be a signaling molecule which affects the development of discrete regions of tissues. Is likely to signal over only few cell diameters. This is Protein Wnt-2 (WNT-2) from Strongylocentrotus purpuratus (Purple sea urchin).